We begin with the raw amino-acid sequence, 214 residues long: ER lumen protein-retaining receptor 3 (214 aa).

The Lumenal portion of the chain corresponds to 1–4; it reads MNVF. A helical membrane pass occupies residues 5-24; sequence RILGDLSHLLAMILLLVKIW. Residues 25–32 are Cytoplasmic-facing; the sequence is RSKSCAGI. Residues 33–52 traverse the membrane as a helical segment; the sequence is SGKSQILFALVFTTRYLDLF. Residues 47 to 48 are interaction with the K-D-E-L motif on target proteins; sequence RY. Residues 53 to 58 lie on the Lumenal side of the membrane; the sequence is SNFISI. A helical transmembrane segment spans residues 59 to 79; sequence YNTVMKVVFLLCAYVTVYMIY. Topologically, residues 80–92 are cytoplasmic; the sequence is WKFRKTFDIENDT. The helical transmembrane segment at 93-110 threads the bilayer; that stretch reads FRLEFLLVPVTGLSFLVN. Topologically, residues 111-116 are lumenal; that stretch reads YSYTPM. Residues 117–135 traverse the membrane as a helical segment; it reads EVLWTFSIYLESVAILPQL. Residues 136 to 149 are Cytoplasmic-facing; the sequence is FMISKTGEAETITT. A helical transmembrane segment spans residues 150–168; sequence HYLFFLGLYRLLYLANWIR. The segment at 159–169 is interaction with the K-D-E-L motif on target proteins; that stretch reads RLLYLANWIRR. The Lumenal portion of the chain corresponds to 169–178; sequence RYQTENFYDQ. Residues 179 to 199 traverse the membrane as a helical segment; the sequence is ISVVSGVVQTIFYCDFFYLYV. Over 200-214 the chain is Cytoplasmic; the sequence is TKVLKGKKLSLPVPV. Residues 204 to 207 form an important for recycling of cargo proteins with the sequence motif K-D-E-L from the Golgi to the endoplasmic reticulum region; that stretch reads KGKK.

Belongs to the ERD2 family.

It is found in the endoplasmic reticulum membrane. Its subcellular location is the golgi apparatus membrane. The protein localises to the cytoplasmic vesicle. It localises to the COPI-coated vesicle membrane. Functionally, receptor for the C-terminal sequence motif K-D-E-L that is present on endoplasmic reticulum resident proteins and that mediates their recycling from the Golgi back to the endoplasmic reticulum. This chain is ER lumen protein-retaining receptor 3 (Kdelr3), found in Mus musculus (Mouse).